An 88-amino-acid polypeptide reads, in one-letter code: Small ribosomal subunit protein uS19 (88 aa).

Belongs to the universal ribosomal protein uS19 family.

In terms of biological role, protein S19 forms a complex with S13 that binds strongly to the 16S ribosomal RNA. This is Small ribosomal subunit protein uS19 from Carsonella ruddii (strain PV).